Consider the following 324-residue polypeptide: 4-hydroxyphenylpyruvate 3-dimethylallyltransferase (324 aa).

Substrate-binding residues include Arg-160 and Glu-281.

This sequence belongs to the aromatic prenyltransferase family. Monomer.

It catalyses the reaction 3-(4-hydroxyphenyl)pyruvate + dimethylallyl diphosphate = 3-dimethylallyl-4-hydroxyphenylpyruvate + diphosphate. It participates in antibiotic biosynthesis. Its function is as follows. Magnesium-independent aromatic prenyltransferase that catalyzes the irreversible transfer of a dimethylallyl group to 4-hydroxyphenylpyruvate to produce the ring A structure in the clorobiocin biosynthesis pathway. Clorobiocin is an aminocoumarin family antibiotic. This Streptomyces roseochromogenus subsp. oscitans protein is 4-hydroxyphenylpyruvate 3-dimethylallyltransferase.